Consider the following 337-residue polypeptide: Ferredoxin--NADP reductase (337 aa).

Residues Glu42, Gln50, Tyr55, Val97, Phe130, Asp292, and Thr333 each coordinate FAD.

This sequence belongs to the ferredoxin--NADP reductase type 2 family. In terms of assembly, homodimer. FAD serves as cofactor.

The enzyme catalyses 2 reduced [2Fe-2S]-[ferredoxin] + NADP(+) + H(+) = 2 oxidized [2Fe-2S]-[ferredoxin] + NADPH. The polypeptide is Ferredoxin--NADP reductase (Streptococcus mutans serotype c (strain ATCC 700610 / UA159)).